The sequence spans 691 residues: DNA-directed RNA polymerase subunit beta' (691 aa).

Zn(2+)-binding residues include Cys76, Cys78, Cys94, and Cys97. Mg(2+) is bound by residues Asp496, Asp498, and Asp500.

Belongs to the RNA polymerase beta' chain family. RpoC1 subfamily. It depends on Mg(2+) as a cofactor. Zn(2+) serves as cofactor.

It localises to the plastid. The catalysed reaction is RNA(n) + a ribonucleoside 5'-triphosphate = RNA(n+1) + diphosphate. DNA-dependent RNA polymerase catalyzes the transcription of DNA into RNA using the four ribonucleoside triphosphates as substrates. The polypeptide is DNA-directed RNA polymerase subunit beta' (Cuscuta exaltata (Tall dodder)).